A 599-amino-acid polypeptide reads, in one-letter code: Matrix metallopeptidase-21 (599 aa).

The first 20 residues, 1-20 (MLTVIRRIFIIQTFIFITAE), serve as a signal peptide directing secretion. A propeptide spanning residues 21-170 (KIFHSRDHSD…NHEHQAPVRK (150 aa)) is cleaved from the precursor. Cysteine 130 contacts Zn(2+). Residues 141 to 170 (DVTGSNSTRNHIRTSTNTSHNHEHQAPVRK) form a disordered region. The segment covering 143-159 (TGSNSTRNHIRTSTNTS) has biased composition (polar residues). Histidine 309 contributes to the Zn(2+) binding site. The active site involves glutamate 310. Positions 313 and 319 each coordinate Zn(2+). An intrachain disulfide couples cysteine 355 to cysteine 586. Hemopexin repeat units follow at residues 356–415 (TGRF…WHGL), 417–473 (SGGV…FPGV), 474–522 (SGPL…FPAI), and 529–585 (VRSL…WFDI). Residue asparagine 398 is glycosylated (N-linked (GlcNAc...) asparagine).

This sequence belongs to the peptidase M10A family. In terms of processing, the precursor is cleaved by a furin endopeptidase.

Plays a specialized role in the generation of left-right asymmetry during embryogenesis. May act as a negative regulator of the NOTCH-signaling pathway. This Danio rerio (Zebrafish) protein is Matrix metallopeptidase-21.